Consider the following 565-residue polypeptide: Adenine deaminase (565 aa).

The protein belongs to the metallo-dependent hydrolases superfamily. Adenine deaminase family. It depends on Mn(2+) as a cofactor.

It carries out the reaction adenine + H2O + H(+) = hypoxanthine + NH4(+). The polypeptide is Adenine deaminase (Lactobacillus delbrueckii subsp. bulgaricus (strain ATCC 11842 / DSM 20081 / BCRC 10696 / JCM 1002 / NBRC 13953 / NCIMB 11778 / NCTC 12712 / WDCM 00102 / Lb 14)).